We begin with the raw amino-acid sequence, 809 residues long: Zinc finger CCCH domain-containing protein 24 (809 aa).

Met-1 is modified (N-acetylmethionine). Residues Met-1–Thr-74 form a disordered region. Residues Glu-30 to Asp-46 are compositionally biased toward polar residues. Basic and acidic residues predominate over residues Val-51–Asn-65. The segment at Trp-79–Ala-107 adopts a C3H1-type zinc-finger fold. S-adenosyl-L-methionine-binding residues include Gln-536 and Glu-586. The tract at residues Glu-652–Lys-693 is disordered. Positions Asn-678–Thr-692 are enriched in basic and acidic residues. S-adenosyl-L-methionine is bound at residue Asp-704. The active-site Nucleophile is the Cys-732.

The protein belongs to the class I-like SAM-binding methyltransferase superfamily. RNA M5U methyltransferase family.

This Arabidopsis thaliana (Mouse-ear cress) protein is Zinc finger CCCH domain-containing protein 24.